A 371-amino-acid chain; its full sequence is DNA replication and repair protein RecF (371 aa).

30–37 provides a ligand contact to ATP; that stretch reads GQNGMGKT.

This sequence belongs to the RecF family.

The protein resides in the cytoplasm. In terms of biological role, the RecF protein is involved in DNA metabolism; it is required for DNA replication and normal SOS inducibility. RecF binds preferentially to single-stranded, linear DNA. It also seems to bind ATP. The chain is DNA replication and repair protein RecF from Phocaeicola vulgatus (strain ATCC 8482 / DSM 1447 / JCM 5826 / CCUG 4940 / NBRC 14291 / NCTC 11154) (Bacteroides vulgatus).